An 84-amino-acid chain; its full sequence is MKVTLTAILTCAAVLVLHTTAAEELEESQLMEVGMPDTELAAVDEERLFECSVSCEIEKEGNKGCKKKKCKGGWKCKFNMCVKV.

The signal sequence occupies residues 1 to 22 (MKVTLTAILTCAAVLVLHTTAA). Positions 23-47 (EELEESQLMEVGMPDTELAAVDEER) are excised as a propeptide. 3 cysteine pairs are disulfide-bonded: Cys51–Cys65, Cys55–Cys76, and Cys70–Cys81.

Belongs to the neurotoxin 12 (Hwtx-2) family. 02 (Hwtx-2) subfamily. In terms of tissue distribution, expressed by the venom gland.

It localises to the secreted. Postsynaptic neurotoxin. This is U4-theraphotoxin-Hhn1b from Cyriopagopus hainanus (Chinese bird spider).